We begin with the raw amino-acid sequence, 937 residues long: Isoleucine--tRNA ligase (937 aa).

Residues 58–68 (PYANGHIHLGT) carry the 'HIGH' region motif. Glutamate 566 lines the L-isoleucyl-5'-AMP pocket. The 'KMSKS' region signature appears at 607 to 611 (KMSKS). Lysine 610 is a binding site for ATP. Residues cysteine 906, cysteine 909, cysteine 925, and cysteine 928 each coordinate Zn(2+).

The protein belongs to the class-I aminoacyl-tRNA synthetase family. IleS type 1 subfamily. As to quaternary structure, monomer. Requires Zn(2+) as cofactor.

It is found in the cytoplasm. It catalyses the reaction tRNA(Ile) + L-isoleucine + ATP = L-isoleucyl-tRNA(Ile) + AMP + diphosphate. Its function is as follows. Catalyzes the attachment of isoleucine to tRNA(Ile). As IleRS can inadvertently accommodate and process structurally similar amino acids such as valine, to avoid such errors it has two additional distinct tRNA(Ile)-dependent editing activities. One activity is designated as 'pretransfer' editing and involves the hydrolysis of activated Val-AMP. The other activity is designated 'posttransfer' editing and involves deacylation of mischarged Val-tRNA(Ile). In Lawsonia intracellularis (strain PHE/MN1-00), this protein is Isoleucine--tRNA ligase.